A 512-amino-acid polypeptide reads, in one-letter code: GMP synthase [glutamine-hydrolyzing] (512 aa).

The 191-residue stretch at 7-197 folds into the Glutamine amidotransferase type-1 domain; the sequence is TIIVLDFGSQ…VFGVCGCSEG (191 aa). C84 (nucleophile) is an active-site residue. Active-site residues include H171 and E173. The 190-residue stretch at 198–387 folds into the GMPS ATP-PPase domain; it reads WNMENFIEVE…LGIPDEIVWR (190 aa). 225-231 contacts ATP; it reads SGGVDSS.

Homodimer.

The catalysed reaction is XMP + L-glutamine + ATP + H2O = GMP + L-glutamate + AMP + diphosphate + 2 H(+). The protein operates within purine metabolism; GMP biosynthesis; GMP from XMP (L-Gln route): step 1/1. In terms of biological role, catalyzes the synthesis of GMP from XMP. The polypeptide is GMP synthase [glutamine-hydrolyzing] (Bacillus cytotoxicus (strain DSM 22905 / CIP 110041 / 391-98 / NVH 391-98)).